Reading from the N-terminus, the 176-residue chain is ATP synthase subunit delta (176 aa).

The protein belongs to the ATPase delta chain family. F-type ATPases have 2 components, F(1) - the catalytic core - and F(0) - the membrane proton channel. F(1) has five subunits: alpha(3), beta(3), gamma(1), delta(1), epsilon(1). F(0) has three main subunits: a(1), b(2) and c(10-14). The alpha and beta chains form an alternating ring which encloses part of the gamma chain. F(1) is attached to F(0) by a central stalk formed by the gamma and epsilon chains, while a peripheral stalk is formed by the delta and b chains.

The protein localises to the cell inner membrane. Its function is as follows. F(1)F(0) ATP synthase produces ATP from ADP in the presence of a proton or sodium gradient. F-type ATPases consist of two structural domains, F(1) containing the extramembraneous catalytic core and F(0) containing the membrane proton channel, linked together by a central stalk and a peripheral stalk. During catalysis, ATP synthesis in the catalytic domain of F(1) is coupled via a rotary mechanism of the central stalk subunits to proton translocation. In terms of biological role, this protein is part of the stalk that links CF(0) to CF(1). It either transmits conformational changes from CF(0) to CF(1) or is implicated in proton conduction. This is ATP synthase subunit delta from Campylobacter concisus (strain 13826).